Reading from the N-terminus, the 516-residue chain is uncharacterized protein (516 aa).

2 PFTB repeats span residues 45–86 and 401–443; these read RQDA…QRAD and DERA…DGSE.

This is an uncharacterized protein from Sinorhizobium fredii (strain NBRC 101917 / NGR234).